The following is a 269-amino-acid chain: Formamidopyrimidine-DNA glycosylase (269 aa).

The active-site Schiff-base intermediate with DNA is the Pro2. Glu3 acts as the Proton donor in catalysis. The active-site Proton donor; for beta-elimination activity is the Lys57. His90, Arg109, and Lys150 together coordinate DNA. Residues 235-269 form an FPG-type zinc finger; it reads QVYGRKGEPCRVCGTPIVATKHAQRATFYCRQCQK. The Proton donor; for delta-elimination activity role is filled by Arg259.

This sequence belongs to the FPG family. In terms of assembly, monomer. The cofactor is Zn(2+).

It carries out the reaction Hydrolysis of DNA containing ring-opened 7-methylguanine residues, releasing 2,6-diamino-4-hydroxy-5-(N-methyl)formamidopyrimidine.. The catalysed reaction is 2'-deoxyribonucleotide-(2'-deoxyribose 5'-phosphate)-2'-deoxyribonucleotide-DNA = a 3'-end 2'-deoxyribonucleotide-(2,3-dehydro-2,3-deoxyribose 5'-phosphate)-DNA + a 5'-end 5'-phospho-2'-deoxyribonucleoside-DNA + H(+). In terms of biological role, involved in base excision repair of DNA damaged by oxidation or by mutagenic agents. Acts as a DNA glycosylase that recognizes and removes damaged bases. Has a preference for oxidized purines, such as 7,8-dihydro-8-oxoguanine (8-oxoG). Has AP (apurinic/apyrimidinic) lyase activity and introduces nicks in the DNA strand. Cleaves the DNA backbone by beta-delta elimination to generate a single-strand break at the site of the removed base with both 3'- and 5'-phosphates. The chain is Formamidopyrimidine-DNA glycosylase from Escherichia coli O6:K15:H31 (strain 536 / UPEC).